The following is an 833-amino-acid chain: Translation initiation factor IF-2 (833 aa).

In terms of domain architecture, tr-type G spans 331–501 (TRAPVVTVMG…LLIAEMQDLK (171 aa)). The tract at residues 340–347 (GHVDHGKT) is G1. 340-347 (GHVDHGKT) serves as a coordination point for GTP. A G2 region spans residues 365–369 (GITQH). Positions 387–390 (DTPG) are G3. GTP is bound by residues 387–391 (DTPGH) and 441–444 (NKID). The tract at residues 441–444 (NKID) is G4. Residues 477-479 (SAL) form a G5 region.

It belongs to the TRAFAC class translation factor GTPase superfamily. Classic translation factor GTPase family. IF-2 subfamily.

It is found in the cytoplasm. One of the essential components for the initiation of protein synthesis. Protects formylmethionyl-tRNA from spontaneous hydrolysis and promotes its binding to the 30S ribosomal subunits. Also involved in the hydrolysis of GTP during the formation of the 70S ribosomal complex. The protein is Translation initiation factor IF-2 of Rickettsia canadensis (strain McKiel).